Reading from the N-terminus, the 210-residue chain is Probable GTP-binding protein EngB (210 aa).

One can recognise an EngB-type G domain in the interval 27 to 201 (MGIEVAFAGR…HQKLDIWFSQ (175 aa)). GTP is bound by residues 35–42 (GRSNAGKS), 62–66 (GRTQL), 80–83 (DLPG), 147–150 (TKAD), and 180–182 (FSV). Residues serine 42 and threonine 64 each coordinate Mg(2+).

The protein belongs to the TRAFAC class TrmE-Era-EngA-EngB-Septin-like GTPase superfamily. EngB GTPase family. Requires Mg(2+) as cofactor.

Its function is as follows. Necessary for normal cell division and for the maintenance of normal septation. The polypeptide is Probable GTP-binding protein EngB (Photorhabdus laumondii subsp. laumondii (strain DSM 15139 / CIP 105565 / TT01) (Photorhabdus luminescens subsp. laumondii)).